The primary structure comprises 430 residues: Adenylosuccinate synthetase (430 aa).

GTP contacts are provided by residues 12-18 and 40-42; these read GDEGKGK and GHT. Asp13 acts as the Proton acceptor in catalysis. The Mg(2+) site is built by Asp13 and Gly40. IMP-binding positions include 13–16, 38–41, Thr130, Arg144, Gln224, Thr239, and Arg303; these read DEGK and NAGH. His41 serves as the catalytic Proton donor. 299–305 provides a ligand contact to substrate; sequence VVTGRKR. GTP-binding positions include Arg305, 331–333, and 413–415; these read KLD and STS.

It belongs to the adenylosuccinate synthetase family. As to quaternary structure, homodimer. Mg(2+) serves as cofactor.

Its subcellular location is the cytoplasm. The enzyme catalyses IMP + L-aspartate + GTP = N(6)-(1,2-dicarboxyethyl)-AMP + GDP + phosphate + 2 H(+). Its pathway is purine metabolism; AMP biosynthesis via de novo pathway; AMP from IMP: step 1/2. In terms of biological role, plays an important role in the de novo pathway of purine nucleotide biosynthesis. Catalyzes the first committed step in the biosynthesis of AMP from IMP. This is Adenylosuccinate synthetase from Methylobacterium nodulans (strain LMG 21967 / CNCM I-2342 / ORS 2060).